The following is a 257-amino-acid chain: Outer membrane protein Omp26La (257 aa).

An N-terminal signal peptide occupies residues 1–19; it reads MKKIALFITASLIAGNTLA.

Belongs to the MipA/OmpV family.

The protein localises to the cell outer membrane. In Vibrio anguillarum (Listonella anguillarum), this protein is Outer membrane protein Omp26La.